Consider the following 192-residue polypeptide: UPF0312 protein PSPTO_5071 (192 aa).

Residues 1–23 (MLKKSLAALALGTALLSAGQAMA) form the signal peptide.

Belongs to the UPF0312 family. Type 1 subfamily.

Its subcellular location is the periplasm. The polypeptide is UPF0312 protein PSPTO_5071 (Pseudomonas syringae pv. tomato (strain ATCC BAA-871 / DC3000)).